The chain runs to 300 residues: NAD kinase (300 aa).

Asp75 functions as the Proton acceptor in the catalytic mechanism. NAD(+)-binding positions include 75 to 76 (DG), 149 to 150 (ND), Arg177, Asp179, 190 to 195 (TAYALS), Ala214, and Gln248.

Belongs to the NAD kinase family. The cofactor is a divalent metal cation.

It is found in the cytoplasm. The catalysed reaction is NAD(+) + ATP = ADP + NADP(+) + H(+). Functionally, involved in the regulation of the intracellular balance of NAD and NADP, and is a key enzyme in the biosynthesis of NADP. Catalyzes specifically the phosphorylation on 2'-hydroxyl of the adenosine moiety of NAD to yield NADP. The polypeptide is NAD kinase (Burkholderia orbicola (strain MC0-3)).